A 690-amino-acid chain; its full sequence is Protein hook (690 aa).

The Calponin-homology (CH) domain occupies 6 to 122 (MEIYESLIRW…RLLQLILGCA (117 aa)). Coiled coils occupy residues 134–515 (QIME…HHAE) and 546–577 (ETTQ…QAAD).

Belongs to the hook family. Homodimer. Interacts with microtubules via its N-terminus.

It is found in the cytoplasm. The protein resides in the cytoskeleton. It localises to the endosome. Its function is as follows. Involved in endocytic trafficking. Probably acts as a cytoskeletal linker protein that tethers endosome vesicles to the cytoskeleton. This is Protein hook from Anopheles gambiae (African malaria mosquito).